A 373-amino-acid polypeptide reads, in one-letter code: NADH-quinone oxidoreductase subunit D (373 aa).

The protein belongs to the complex I 49 kDa subunit family. NDH-1 is composed of 14 different subunits. Subunits NuoB, C, D, E, F, and G constitute the peripheral sector of the complex.

It is found in the cell inner membrane. It catalyses the reaction a quinone + NADH + 5 H(+)(in) = a quinol + NAD(+) + 4 H(+)(out). NDH-1 shuttles electrons from NADH, via FMN and iron-sulfur (Fe-S) centers, to quinones in the respiratory chain. The immediate electron acceptor for the enzyme in this species is believed to be ubiquinone. Couples the redox reaction to proton translocation (for every two electrons transferred, four hydrogen ions are translocated across the cytoplasmic membrane), and thus conserves the redox energy in a proton gradient. This Syntrophobacter fumaroxidans (strain DSM 10017 / MPOB) protein is NADH-quinone oxidoreductase subunit D.